Consider the following 317-residue polypeptide: uncharacterized protein (317 aa).

The next 7 helical transmembrane spans lie at 24–44 (ISII…TGIM), 63–83 (LSIS…SILA), 136–156 (LGVA…ISED), 187–207 (LIPI…IGFF), 229–249 (ILAL…GGFL), 252–272 (GILS…LTFS), and 295–315 (IVMV…AGLL).

This sequence to M.jannaschii MJ0880, MJ1556 and MJ1589.

It is found in the cell membrane. This is an uncharacterized protein from Methanocaldococcus jannaschii (strain ATCC 43067 / DSM 2661 / JAL-1 / JCM 10045 / NBRC 100440) (Methanococcus jannaschii).